A 107-amino-acid chain; its full sequence is Protein phosphatase 1 regulatory subunit INH3 (107 aa).

Residues 1–14 (MSTATRPSSSATTS) show a composition bias toward low complexity. 2 disordered regions span residues 1–40 (MSTA…KKKK) and 69–107 (PFDE…KAVD). Positions 71 to 80 (DEDDSEEEDD) are enriched in acidic residues. Over residues 81–94 (NNHHCDHNHEHSES) the composition is skewed to basic and acidic residues. The span at 95–107 (GEASSSNDSKAVD) shows a compositional bias: low complexity.

As to quaternary structure, interacts with protein phosphatase 1. Expressed in roots, cotyledons, leaves, flowers and embryos.

In terms of biological role, inhibitor of protein-phosphatase 1 (PP1). Binds to and inhibits PP1 activity. Required for early embryogenesis progression. The sequence is that of Protein phosphatase 1 regulatory subunit INH3 from Arabidopsis thaliana (Mouse-ear cress).